Reading from the N-terminus, the 383-residue chain is Putative F-box protein At3g22650 (383 aa).

The F-box domain occupies 3-50; sequence SCERSLLPIDIIEEICCRIPVEYLTQFKLTCKQWFALLKDKRFIYKYL.

This chain is Putative F-box protein At3g22650, found in Arabidopsis thaliana (Mouse-ear cress).